The following is a 454-amino-acid chain: Tumor necrosis factor receptor superfamily member 1A (454 aa).

An N-terminal signal peptide occupies residues 1–29 (MGLPTVPGLLLSLVLLALLMGIHPSGVTG). At 30 to 212 (LVPSLGDREK…VTNPQDSGTA (183 aa)) the chain is on the extracellular side. TNFR-Cys repeat units lie at residues 43 to 82 (LCPQ…TVCR), 83 to 125 (ECEK…DTVC), 126 to 166 (GCKE…NTVC), and 167 to 196 (NCHA…KLCL). 12 cysteine pairs are disulfide-bonded: Cys-44–Cys-58, Cys-59–Cys-72, Cys-62–Cys-81, Cys-84–Cys-99, Cys-102–Cys-117, Cys-105–Cys-125, Cys-127–Cys-143, Cys-146–Cys-158, Cys-149–Cys-166, Cys-168–Cys-179, Cys-182–Cys-195, and Cys-185–Cys-191. Residue Asn-54 is glycosylated (N-linked (GlcNAc...) asparagine). Asn-151 carries an N-linked (GlcNAc...) asparagine glycan. The N-linked (GlcNAc...) asparagine glycan is linked to Asn-202. A helical transmembrane segment spans residues 213 to 235 (VLLPLVILLGLCLLSFIFISLMC). The Cytoplasmic segment spans residues 236 to 454 (RYPRWRPEVY…APSSTTRLPR (219 aa)). Positions 339 to 349 (VQKWEDSAHPQ) are N-SMase activation domain (NSD). A Death domain is found at 356-441 (LAILYAVVDG…GCLENILEAL (86 aa)). A glycan ((Microbial infection) N-beta-linked (GlcNAc) arginine) is linked at Arg-376.

As to quaternary structure, binding of TNF to the extracellular domain leads to homotrimerization. The aggregated death domains provide a novel molecular interface that interacts specifically with the death domain of TRADD. Various TRADD-interacting proteins such as TRAFS, RIPK1 and possibly FADD, are recruited to the complex by their association with TRADD. This complex activates at least two distinct signaling cascades, apoptosis and NF-kappa-B signaling. Interacts with BAG4, BABAM2, FEM1B, GRB2, SQSTM1 and TRPC4AP. Interacts with DAB2IP. Interacts directly with NOL3 (via CARD domain); inhibits TNF-signaling pathway. Interacts with SH3RF2, TRADD and RIPK1. SH3RF2 facilitates the recruitment of RIPK1 and TRADD to TNFRSF1A in a TNF-alpha-dependent process. Interacts with PGLYRP1; this interaction is important for cell death induction. Interacts (via death domain) with MADD (via death domain). In terms of processing, (Microbial infection) Glycosylated at Arg-376 by S.typhimurium protein Ssek3: arginine GlcNAcylation prevents homotypic/heterotypic death domain interactions.

Its subcellular location is the cell membrane. The protein localises to the golgi apparatus membrane. Functionally, receptor for TNFSF2/TNF-alpha and homotrimeric TNFSF1/lymphotoxin-alpha. The adapter molecule FADD recruits caspase-8 to the activated receptor. The resulting death-inducing signaling complex (DISC) performs caspase-8 proteolytic activation which initiates the subsequent cascade of caspases (aspartate-specific cysteine proteases) mediating apoptosis. In Mus musculus (Mouse), this protein is Tumor necrosis factor receptor superfamily member 1A (Tnfrsf1a).